We begin with the raw amino-acid sequence, 231 residues long: AA9 family lytic polysaccharide monooxygenase C (231 aa).

Residues methionine 1 to alanine 18 form the signal peptide. Histidine 19 contacts Cu(2+). Cysteine 60 and cysteine 179 are disulfide-bonded. Asparagine 69 and asparagine 143 each carry an N-linked (GlcNAc...) asparagine glycan. The O2 site is built by histidine 165 and glutamine 174. Cu(2+) is bound at residue tyrosine 176.

This sequence belongs to the polysaccharide monooxygenase AA9 family. Requires Cu(2+) as cofactor.

Its subcellular location is the secreted. It carries out the reaction [(1-&gt;4)-beta-D-glucosyl]n+m + reduced acceptor + O2 = 4-dehydro-beta-D-glucosyl-[(1-&gt;4)-beta-D-glucosyl]n-1 + [(1-&gt;4)-beta-D-glucosyl]m + acceptor + H2O.. Its function is as follows. Lytic polysaccharide monooxygenase (LPMO) that depolymerizes crystalline and amorphous polysaccharides via the oxidation of scissile alpha- or beta-(1-4)-glycosidic bonds, yielding C1 oxidation products. Catalysis by LPMOs requires the reduction of the active-site copper from Cu(II) to Cu(I) by a reducing agent and H(2)O(2) or O(2) as a cosubstrate. This is AA9 family lytic polysaccharide monooxygenase C from Emericella nidulans (strain FGSC A4 / ATCC 38163 / CBS 112.46 / NRRL 194 / M139) (Aspergillus nidulans).